Consider the following 265-residue polypeptide: Enolase-phosphatase E1 (265 aa).

Asp18 and Glu20 together coordinate Mg(2+). Residues 144 to 145 (SS) and Lys188 each bind substrate. Asp215 provides a ligand contact to Mg(2+).

The protein belongs to the HAD-like hydrolase superfamily. MasA/MtnC family. Monomer. Mg(2+) is required as a cofactor.

The protein localises to the cytoplasm. It is found in the nucleus. It carries out the reaction 5-methylsulfanyl-2,3-dioxopentyl phosphate + H2O = 1,2-dihydroxy-5-(methylsulfanyl)pent-1-en-3-one + phosphate. Its pathway is amino-acid biosynthesis; L-methionine biosynthesis via salvage pathway; L-methionine from S-methyl-5-thio-alpha-D-ribose 1-phosphate: step 3/6. The protein operates within amino-acid biosynthesis; L-methionine biosynthesis via salvage pathway; L-methionine from S-methyl-5-thio-alpha-D-ribose 1-phosphate: step 4/6. Bifunctional enzyme that catalyzes the enolization of 2,3-diketo-5-methylthiopentyl-1-phosphate (DK-MTP-1-P) into the intermediate 2-hydroxy-3-keto-5-methylthiopentenyl-1-phosphate (HK-MTPenyl-1-P), which is then dephosphorylated to form the acireductone 1,2-dihydroxy-3-keto-5-methylthiopentene (DHK-MTPene). This chain is Enolase-phosphatase E1, found in Candida albicans (strain SC5314 / ATCC MYA-2876) (Yeast).